The following is a 325-amino-acid chain: Inactive S-adenosylmethionine decarboxylase prozyme (325 aa).

Belongs to the eukaryotic AdoMetDC family. In terms of assembly, forms a heterodimer with S-adenosylmethionine decarboxylase AdoMetDC; heterodimerization is required to activate AdoMetDC.

Its pathway is amine and polyamine biosynthesis; S-adenosylmethioninamine biosynthesis; S-adenosylmethioninamine from S-adenosyl-L-methionine: step 1/1. In terms of biological role, probably has no catalytic activity due to the loss of several residues required for processing and catalysis. Forms a complex with S-adenosylmethionine decarboxylase AdoMetDC which is essential to activate AdoMetDC. Required for the biosynthesis of the polyamine spermidine. Required for growth and survival during the bloodstream life cycle stage. This Trypanosoma brucei brucei protein is Inactive S-adenosylmethionine decarboxylase prozyme.